A 264-amino-acid chain; its full sequence is DNA repair protein RecO (264 aa).

It belongs to the RecO family.

Functionally, involved in DNA repair and RecF pathway recombination. The protein is DNA repair protein RecO of Prosthecochloris aestuarii (strain DSM 271 / SK 413).